The sequence spans 160 residues: Cytochrome b6-f complex subunit 4 (160 aa).

3 helical membrane-spanning segments follow: residues 36-56 (LLYV…GLAV), 95-115 (LLGI…PFIE), and 131-151 (AVFL…TFPI).

The protein belongs to the cytochrome b family. PetD subfamily. As to quaternary structure, the 4 large subunits of the cytochrome b6-f complex are cytochrome b6, subunit IV (17 kDa polypeptide, PetD), cytochrome f and the Rieske protein, while the 4 small subunits are PetG, PetL, PetM and PetN. The complex functions as a dimer.

It localises to the cellular thylakoid membrane. Component of the cytochrome b6-f complex, which mediates electron transfer between photosystem II (PSII) and photosystem I (PSI), cyclic electron flow around PSI, and state transitions. The chain is Cytochrome b6-f complex subunit 4 from Crocosphaera subtropica (strain ATCC 51142 / BH68) (Cyanothece sp. (strain ATCC 51142)).